The sequence spans 601 residues: MTDSSPDASPSSLKIYFRLLGYVRPYIGLFLISIVGFLIFASTQPMLGYILKYFVDGLSNPQAVLFPGVPYLRDMQLLQAVPLLIVLIAAWQGLGSYLGNYFLAKVSLGLVHDLRVQLFNNLLTLPNRYFDKHNSGHLISRITFNVTMVTGAATDAIKVVIREGMTVIFLFGSLLWMNWRLTLVMIAILPLIAVMVRTASKKFRKQSKKIQVAMGDVTHVASETIQGYRVVRSFGGETYEQQRFLAASQGNTDKQLRMTRTGAIYTPLLQLVIYSAMAVLMFLVLYLRGDASAGEMVAYITMAGLLPKPIRQLSEVSSTIQKGVAGAESIFEQLDVEPEVDRGTVERASINGHLEVRNLSFTYPGTERQVLDDISFSIEPGKMVALVGRSGSGKSTLANLIPRFYHHDKGQILLDGTEVEDFRLLNLRRHIAQVTQHVTLFSDTVANNIAYGDLAGAPREDIEKAAADAYAMDFIAQLPEGLDTQVGENGVLLSGGQRQRLAIARALLKNAPLLILDEATSALDTESERHIQAALDKVMKGRTTLVIAHRLSTIEKADLILVMDQGRIVERGSHAQLLAQNGYYSRLHAMGLEEPAPSGIA.

4 consecutive transmembrane segments (helical) span residues 27–47 (IGLFLISIVGFLIFASTQPML), 83–103 (LLIVLIAAWQGLGSYLGNYFL), 174–194 (LLWMNWRLTLVMIAILPLIAV), and 267–287 (PLLQLVIYSAMAVLMFLVLYL). Residues 31–322 (LISIVGFLIF…LSEVSSTIQK (292 aa)) form the ABC transmembrane type-1 domain. One can recognise an ABC transporter domain in the interval 354–590 (LEVRNLSFTY…NGYYSRLHAM (237 aa)). 388–395 (GRSGSGKS) serves as a coordination point for ATP.

Belongs to the ABC transporter superfamily. Lipid exporter (TC 3.A.1.106) family. In terms of assembly, homodimer.

The protein resides in the cell inner membrane. It carries out the reaction ATP + H2O + lipid A-core oligosaccharideSide 1 = ADP + phosphate + lipid A-core oligosaccharideSide 2.. Its function is as follows. Involved in lipopolysaccharide (LPS) biosynthesis. Translocates lipid A-core from the inner to the outer leaflet of the inner membrane. Transmembrane domains (TMD) form a pore in the inner membrane and the ATP-binding domain (NBD) is responsible for energy generation. The protein is ATP-dependent lipid A-core flippase of Pseudomonas fluorescens (strain ATCC BAA-477 / NRRL B-23932 / Pf-5).